Consider the following 152-residue polypeptide: Small ribosomal subunit protein uS13 (152 aa).

An N-acetylserine modification is found at serine 2. Residue lysine 91 forms a Glycyl lysine isopeptide (Lys-Gly) (interchain with G-Cter in SUMO2) linkage. 2 positions are modified to N6-acetyllysine; alternate: lysine 94 and lysine 106. Residues lysine 94 and lysine 106 each participate in a glycyl lysine isopeptide (Lys-Gly) (interchain with G-Cter in SUMO2); alternate cross-link.

The protein belongs to the universal ribosomal protein uS13 family. In terms of assembly, component of the small ribosomal subunit.

Its subcellular location is the cytoplasm. Its function is as follows. Component of the small ribosomal subunit. The ribosome is a large ribonucleoprotein complex responsible for the synthesis of proteins in the cell. The chain is Small ribosomal subunit protein uS13 (RPS18) from Homo sapiens (Human).